A 136-amino-acid polypeptide reads, in one-letter code: Nucleoside diphosphate kinase (136 aa).

ATP is bound by residues Lys10, Phe58, Arg86, Thr92, Arg104, and Asn114. His117 functions as the Pros-phosphohistidine intermediate in the catalytic mechanism.

It belongs to the NDK family. In terms of assembly, homotetramer. Requires Mg(2+) as cofactor.

It is found in the cytoplasm. It catalyses the reaction a 2'-deoxyribonucleoside 5'-diphosphate + ATP = a 2'-deoxyribonucleoside 5'-triphosphate + ADP. It carries out the reaction a ribonucleoside 5'-diphosphate + ATP = a ribonucleoside 5'-triphosphate + ADP. Functionally, major role in the synthesis of nucleoside triphosphates other than ATP. The ATP gamma phosphate is transferred to the NDP beta phosphate via a ping-pong mechanism, using a phosphorylated active-site intermediate. This is Nucleoside diphosphate kinase from Mycobacterium leprae (strain TN).